Here is a 138-residue protein sequence, read N- to C-terminus: Cysteine desulfuration protein SufE (138 aa).

The Cysteine persulfide intermediate role is filled by Cys51.

This sequence belongs to the SufE family. Homodimer. Interacts with SufS.

It is found in the cytoplasm. It functions in the pathway cofactor biosynthesis; iron-sulfur cluster biosynthesis. Participates in cysteine desulfuration mediated by SufS. Cysteine desulfuration mobilizes sulfur from L-cysteine to yield L-alanine and constitutes an essential step in sulfur metabolism for biosynthesis of a variety of sulfur-containing biomolecules. Functions as a sulfur acceptor for SufS, by mediating the direct transfer of the sulfur atom from the S-sulfanylcysteine of SufS, an intermediate product of cysteine desulfuration process. The polypeptide is Cysteine desulfuration protein SufE (Pectobacterium carotovorum subsp. carotovorum (strain PC1)).